The sequence spans 451 residues: Glutamyl-tRNA reductase (451 aa).

Substrate is bound by residues 47 to 50, Ser-132, 137 to 139, and Gln-143; these read TCNR and EPQ. The active-site Nucleophile is Cys-48. 212–217 contacts NADP(+); sequence AAGEMN.

It belongs to the glutamyl-tRNA reductase family. As to quaternary structure, homodimer.

It catalyses the reaction (S)-4-amino-5-oxopentanoate + tRNA(Glu) + NADP(+) = L-glutamyl-tRNA(Glu) + NADPH + H(+). Its pathway is porphyrin-containing compound metabolism; protoporphyrin-IX biosynthesis; 5-aminolevulinate from L-glutamyl-tRNA(Glu): step 1/2. In terms of biological role, catalyzes the NADPH-dependent reduction of glutamyl-tRNA(Glu) to glutamate 1-semialdehyde (GSA). The chain is Glutamyl-tRNA reductase from Psychrobacter sp. (strain PRwf-1).